We begin with the raw amino-acid sequence, 348 residues long: sn-glycerol-3-phosphate import ATP-binding protein UgpC 3 (348 aa).

The 231-residue stretch at 4 to 234 (INIVDVKKNY…PASLFVAGFI (231 aa)) folds into the ABC transporter domain. Residue 36 to 43 (GPSGCGKS) participates in ATP binding.

Belongs to the ABC transporter superfamily. sn-glycerol-3-phosphate importer (TC 3.A.1.1.3) family. The complex is composed of two ATP-binding proteins (UgpC), two transmembrane proteins (UgpA and UgpE) and a solute-binding protein (UgpB).

The protein localises to the cell inner membrane. It carries out the reaction sn-glycerol 3-phosphate(out) + ATP + H2O = sn-glycerol 3-phosphate(in) + ADP + phosphate + H(+). Its function is as follows. Part of the ABC transporter complex UgpBAEC involved in sn-glycerol-3-phosphate (G3P) import. Responsible for energy coupling to the transport system. This is sn-glycerol-3-phosphate import ATP-binding protein UgpC 3 from Rhizobium etli (strain ATCC 51251 / DSM 11541 / JCM 21823 / NBRC 15573 / CFN 42).